The chain runs to 195 residues: Probable GTP-binding protein EngB (195 aa).

The EngB-type G domain maps to 22–194 (LKGEVAFVGR…LDLISTLLKE (173 aa)). GTP is bound by residues 30–37 (GRSNVGKS), 56–60 (GKTRS), 74–77 (DLPG), 141–144 (TKMD), and 173–175 (TSS). Residues S37 and T58 each contribute to the Mg(2+) site.

This sequence belongs to the TRAFAC class TrmE-Era-EngA-EngB-Septin-like GTPase superfamily. EngB GTPase family. The cofactor is Mg(2+).

Functionally, necessary for normal cell division and for the maintenance of normal septation. The sequence is that of Probable GTP-binding protein EngB from Thermotoga sp. (strain RQ2).